We begin with the raw amino-acid sequence, 445 residues long: Ribosome biogenesis protein YTM1 (445 aa).

Residues 8-89 are ubiquitin-like (UBL) domain; that stretch reads VKVKFFTREQ…EAVLNVEYTR (82 aa). Residues 99–445 form a sufficient for interaction with ERB1 and association with 66S pre-ribosomes region; that stretch reads SFSNEDWVSA…FNKGDNIFKN (347 aa). WD repeat units follow at residues 101–138, 140–178, 195–232, 270–310, 312–351, 358–398, and 409–445; these read SNEDWVSALDVGAERIVSGSYDGVVRTWNLSGKIEKQY, GHTGAVRAVKFISSTRLVSGGNDRTLRLWKTKNDDVKHV, GHQAPVVSVDVQGDRILSASYDNSIGFWSTNHKDMTAV, SHKA…CVDT, STSYSLLSMVELPKLRLLACGSSARHITLHDPRADSSAKI, GHKN…SIYT, and GINDKVFAVKWAKGVGIISGGQDKKIQFNKGDNIFKN.

The protein belongs to the WD repeat WDR12/YTM1 family. In terms of assembly, component of the NOP7 complex, composed of ERB1, NOP7 and YTM1. The complex is held together by ERB1, which interacts with NOP7 via its N-terminal domain and with YTM1 via a high-affinity interaction between the seven-bladed beta-propeller domains of the 2 proteins. The NOP7 complex associates with the 66S pre-ribosome. Interacts (via UBL domain) with MDN1 (via VWFA/MIDAS domain).

It localises to the nucleus. Its subcellular location is the nucleolus. The protein resides in the nucleoplasm. Its function is as follows. Component of the NOP7 complex, which is required for maturation of the 25S and 5.8S ribosomal RNAs and formation of the 60S ribosome. In Eremothecium gossypii (strain ATCC 10895 / CBS 109.51 / FGSC 9923 / NRRL Y-1056) (Yeast), this protein is Ribosome biogenesis protein YTM1.